A 193-amino-acid polypeptide reads, in one-letter code: Acyl carrier protein phosphodiesterase (193 aa).

The protein belongs to the AcpH family.

The enzyme catalyses holo-[ACP] + H2O = apo-[ACP] + (R)-4'-phosphopantetheine + H(+). Its function is as follows. Converts holo-ACP to apo-ACP by hydrolytic cleavage of the phosphopantetheine prosthetic group from ACP. In Pectobacterium atrosepticum (strain SCRI 1043 / ATCC BAA-672) (Erwinia carotovora subsp. atroseptica), this protein is Acyl carrier protein phosphodiesterase.